Reading from the N-terminus, the 503-residue chain is Arabinose import ATP-binding protein AraG (503 aa).

2 ABC transporter domains span residues 5–240 (LRFD…MVGR) and 253–497 (LGDV…LPQG). 37-44 (GENGAGKS) contributes to the ATP binding site.

It belongs to the ABC transporter superfamily. Arabinose importer (TC 3.A.1.2.2) family. The complex is composed of two ATP-binding proteins (AraG), two transmembrane proteins (AraH) and a solute-binding protein (AraF).

The protein resides in the cell inner membrane. The enzyme catalyses L-arabinose(out) + ATP + H2O = L-arabinose(in) + ADP + phosphate + H(+). In terms of biological role, part of the ABC transporter complex AraFGH involved in arabinose import. Responsible for energy coupling to the transport system. The sequence is that of Arabinose import ATP-binding protein AraG from Burkholderia pseudomallei (strain K96243).